The primary structure comprises 571 residues: Sulfite reductase [NADPH] hemoprotein beta-component (571 aa).

Residues Cys-436, Cys-442, Cys-481, and Cys-485 each contribute to the [4Fe-4S] cluster site. Residue Cys-485 participates in siroheme binding.

It belongs to the nitrite and sulfite reductase 4Fe-4S domain family. Alpha(8)-beta(8). The alpha component is a flavoprotein, the beta component is a hemoprotein. The cofactor is siroheme. [4Fe-4S] cluster is required as a cofactor.

It carries out the reaction hydrogen sulfide + 3 NADP(+) + 3 H2O = sulfite + 3 NADPH + 4 H(+). The protein operates within sulfur metabolism; hydrogen sulfide biosynthesis; hydrogen sulfide from sulfite (NADPH route): step 1/1. Functionally, component of the sulfite reductase complex that catalyzes the 6-electron reduction of sulfite to sulfide. This is one of several activities required for the biosynthesis of L-cysteine from sulfate. The polypeptide is Sulfite reductase [NADPH] hemoprotein beta-component (Anoxybacillus flavithermus (strain DSM 21510 / WK1)).